The following is a 122-amino-acid chain: Large ribosomal subunit protein uL14 (122 aa).

The protein belongs to the universal ribosomal protein uL14 family. In terms of assembly, part of the 50S ribosomal subunit. Forms a cluster with proteins L3 and L19. In the 70S ribosome, L14 and L19 interact and together make contacts with the 16S rRNA in bridges B5 and B8.

Functionally, binds to 23S rRNA. Forms part of two intersubunit bridges in the 70S ribosome. This is Large ribosomal subunit protein uL14 from Leuconostoc mesenteroides subsp. mesenteroides (strain ATCC 8293 / DSM 20343 / BCRC 11652 / CCM 1803 / JCM 6124 / NCDO 523 / NBRC 100496 / NCIMB 8023 / NCTC 12954 / NRRL B-1118 / 37Y).